The primary structure comprises 227 residues: PKHD-type hydroxylase BURPS668_A1690 (227 aa).

Positions 78–178 (KVFPPLFNRY…RVASFFWIQS (101 aa)) constitute a Fe2OG dioxygenase domain. His96, Asp98, and His159 together coordinate Fe cation. Position 169 (Arg169) interacts with 2-oxoglutarate.

Fe(2+) serves as cofactor. Requires L-ascorbate as cofactor.

This chain is PKHD-type hydroxylase BURPS668_A1690, found in Burkholderia pseudomallei (strain 668).